We begin with the raw amino-acid sequence, 727 residues long: Elongation factor 2 (727 aa).

In terms of domain architecture, tr-type G spans 19 to 260 (DQIRNMGICA…MAIKHLPNPL (242 aa)). Residues 28 to 35 (AHIDHGKT), 94 to 98 (DTPGH), and 148 to 151 (NKVD) each bind GTP. H603 is modified (diphthamide).

Belongs to the TRAFAC class translation factor GTPase superfamily. Classic translation factor GTPase family. EF-G/EF-2 subfamily.

It is found in the cytoplasm. Catalyzes the GTP-dependent ribosomal translocation step during translation elongation. During this step, the ribosome changes from the pre-translocational (PRE) to the post-translocational (POST) state as the newly formed A-site-bound peptidyl-tRNA and P-site-bound deacylated tRNA move to the P and E sites, respectively. Catalyzes the coordinated movement of the two tRNA molecules, the mRNA and conformational changes in the ribosome. The protein is Elongation factor 2 (fusA) of Methanococcus vannielii (strain ATCC 35089 / DSM 1224 / JCM 13029 / OCM 148 / SB).